The sequence spans 262 residues: Acyl-coenzyme A diphosphatase FITM2 (262 aa).

Residues 1–23 lie on the Cytoplasmic side of the membrane; the sequence is MEHLERCAWFLRGTLVRATVRRH. The helical transmembrane segment at 24–44 threads the bilayer; that stretch reads LPWALVAAMLAGSVVKELSPL. The Lumenal segment spans residues 45 to 57; that stretch reads PESYLSNKRNVLN. Residues 58 to 78 form a helical membrane-spanning segment; sequence VYFVKLAWAWTVCLLLPFIAL. Residues 79 to 93 are Cytoplasmic-facing; it reads TNYHLTGKTSLVLRR. Residues 94–114 traverse the membrane as a helical segment; the sequence is LSTLLVGTAIWYICTALFSNI. Residues 115-145 lie on the Lumenal side of the membrane; that stretch reads EHYTGSCYQSPALEGIRQEHRSKQQCHREGG. A helical transmembrane segment spans residues 146 to 166; that stretch reads FWHGFDISGHSFLLTFCALMI. The active site involves histidine 155. Over 167–190 the chain is Cytoplasmic; the sequence is VEEMAVLHEVKTDRGHHLHAAITT. A helical transmembrane segment spans residues 191–211; the sequence is LVVALGFLTFIWVWMFLCTAV. Residues 212-218 lie on the Lumenal side of the membrane; the sequence is YFHDLTQ. The active site involves histidine 214. The helical transmembrane segment at 219 to 239 threads the bilayer; it reads KVFGTMFGLLGWYGTYGYWYL. The Cytoplasmic segment spans residues 240 to 262; that stretch reads KSFSPGLPPQSCSLTLKRDTYKK.

The protein belongs to the FIT family. In terms of tissue distribution, widely expressed, with highest levels in white and brown adipose tissues (at protein level). In the heart, mRNA expression levels do not correlate well with protein levels, suggesting post-transcriptional regulation in this organ.

It localises to the endoplasmic reticulum membrane. It catalyses the reaction an acyl-CoA + H2O = an acyl-4'-phosphopantetheine + adenosine 3',5'-bisphosphate + 2 H(+). The enzyme catalyses (9Z)-octadecenoyl-CoA + H2O = S-(9Z-octadecenoyl)-4'-phosphopantetheine + adenosine 3',5'-bisphosphate + 2 H(+). It carries out the reaction (5Z,8Z,11Z,14Z)-eicosatetraenoyl-CoA + H2O = S-(5Z,8Z,11Z,14Z-eicosatetraenoyl)-4'-phosphopantetheine + adenosine 3',5'-bisphosphate + 2 H(+). The catalysed reaction is hexadecanoyl-CoA + H2O = S-hexadecanoyl-4'-phosphopantetheine + adenosine 3',5'-bisphosphate + 2 H(+). Functionally, fatty acyl-coenzyme A (CoA) diphosphatase that hydrolyzes fatty acyl-CoA to yield acyl-4'-phosphopantetheine and adenosine 3',5'-bisphosphate. Preferentially hydrolyzes unsaturated long-chain acyl-CoA substrates such as oleoyl-CoA/(9Z)-octadecenoyl-CoA and arachidonoyl-CoA/(5Z,8Z,11Z,14Z)-eicosatetraenoyl-CoA in the endoplasmic reticulum (ER) lumen. This catalytic activity is required for maintaining ER structure and for lipid droplets (LDs) biogenesis, which are lipid storage organelles involved in maintaining lipid and energy homeostasis. Directly binds to diacylglycerol (DAGs) and triacylglycerol, which is also important for LD biogenesis. May support directional budding of nacent LDs from the ER into the cytosol by reducing DAG levels at sites of LD formation. Plays a role in the regulation of cell morphology and cytoskeletal organization. This chain is Acyl-coenzyme A diphosphatase FITM2, found in Mus musculus (Mouse).